The chain runs to 397 residues: Elongation factor Tu (397 aa).

Residues 10-207 enclose the tr-type G domain; the sequence is KPHCNIGTIG…AVDEYIPQPE (198 aa). The interval 19-26 is G1; sequence GHVDHGKT. Residue 19 to 26 participates in GTP binding; the sequence is GHVDHGKT. T26 serves as a coordination point for Mg(2+). Positions 61 to 65 are G2; the sequence is GITIS. The G3 stretch occupies residues 82–85; it reads DCPG. Residues 82–86 and 137–140 each bind GTP; these read DCPGH and NKVD. The G4 stretch occupies residues 137–140; sequence NKVD. The G5 stretch occupies residues 175–177; it reads SAL.

Belongs to the TRAFAC class translation factor GTPase superfamily. Classic translation factor GTPase family. EF-Tu/EF-1A subfamily. Monomer.

Its subcellular location is the cytoplasm. The catalysed reaction is GTP + H2O = GDP + phosphate + H(+). Functionally, GTP hydrolase that promotes the GTP-dependent binding of aminoacyl-tRNA to the A-site of ribosomes during protein biosynthesis. The polypeptide is Elongation factor Tu (Zymomonas mobilis subsp. mobilis (strain ATCC 31821 / ZM4 / CP4)).